A 381-amino-acid chain; its full sequence is L-lactate dehydrogenase A-like 6B (381 aa).

NAD(+)-binding positions include 101-106 and R148; that span reads DVDEGR. Residues R155, N187, and R218 each contribute to the substrate site. N187 serves as a coordination point for NAD(+). Residue H242 is the Proton acceptor of the active site. Residue T297 participates in substrate binding.

The protein belongs to the LDH/MDH superfamily. LDH family.

It catalyses the reaction (S)-lactate + NAD(+) = pyruvate + NADH + H(+). It functions in the pathway fermentation; pyruvate fermentation to lactate; (S)-lactate from pyruvate: step 1/1. The protein is L-lactate dehydrogenase A-like 6B (LDHAL6B) of Bos taurus (Bovine).